Reading from the N-terminus, the 845-residue chain is Protein kintoun (845 aa).

The segment covering 362 to 382 has biased composition (basic and acidic residues); sequence SKEQAQMHETLRHFSREDSGV. Disordered stretches follow at residues 362–420, 575–691, and 773–845; these read SKEQ…PVRH, QALK…SMSD, and AQHR…EMDD. Phosphoserine is present on S380. Acidic residues predominate over residues 391 to 400; the sequence is PVEEDPDGEL. Residues 584–593 show a composition bias toward basic and acidic residues; that stretch reads GTKEEEKENQ. Residues 611 to 622 show a composition bias toward basic residues; the sequence is KPGKKQRKRNKK. The segment covering 640–671 has biased composition (polar residues); it reads LTKNSELQPKSTFNLPQRKQRSYSECNDSTGG. S779 carries the post-translational modification Phosphoserine. The span at 794-804 shows a compositional bias: polar residues; the sequence is LKQQENQSRNC.

Belongs to the PIH1 family. Kintoun subfamily. In terms of assembly, interacts with Pp1alpha-96A, Pp1-87B, Pp1-13C and flw.

The protein localises to the cytoplasm. Its function is as follows. Required for cytoplasmic pre-assembly of axonemal dyneins, thereby playing a central role in motility in cilia and flagella. Involved in pre-assembly of dynein arm complexes in the cytoplasm before intraflagellar transport loads them for the ciliary compartment. In Drosophila erecta (Fruit fly), this protein is Protein kintoun.